Consider the following 335-residue polypeptide: MPPLFCVLKAFFIGLVVSLILVKPLIWLKKQGLQDRIHKDHCEKLEKLHKNKAHIPTAGGIIFVLSVVLSILLLLPCNLWSTWFLVGATLLWGALGWRDDQIKNKRKVGHGLSAKRKFFIQNCLAIGTVLPIMIAYGESFLCMHLPFVGIVSLPHCWLGYLFSFSIAVLAIVGTSNSVNLTDGLDGLAAGSMVIACLGMLIVTFAYGAPWAFISGVLLATLAGSCLGFLYYNRSPARIFMGDTGSLFLGGMLGICAVLLRAEFMLLFMGGIFVLESLSVILQVGSCKLRKKRVFLCSPLHHHYEYKGYPEKVVVRNFWIIEFLCVAIGIFAVFWG.

The next 9 membrane-spanning stretches (helical) occupy residues 2-22 (PPLF…LILV), 55-75 (IPTA…LLLL), 77-97 (CNLW…ALGW), 118-137 (FFIQ…IAYG), 153-173 (LPHC…AIVG), 193-213 (VIAC…WAFI), 238-258 (IFMG…CAVL), 263-283 (FMLL…ILQV), and 313-333 (VVRN…FAVF).

The protein belongs to the glycosyltransferase 4 family. MraY subfamily. The cofactor is Mg(2+).

Its subcellular location is the cell inner membrane. It carries out the reaction UDP-N-acetyl-alpha-D-muramoyl-L-alanyl-gamma-D-glutamyl-meso-2,6-diaminopimeloyl-D-alanyl-D-alanine + di-trans,octa-cis-undecaprenyl phosphate = di-trans,octa-cis-undecaprenyl diphospho-N-acetyl-alpha-D-muramoyl-L-alanyl-D-glutamyl-meso-2,6-diaminopimeloyl-D-alanyl-D-alanine + UMP. The protein operates within cell wall biogenesis; peptidoglycan biosynthesis. Functionally, catalyzes the initial step of the lipid cycle reactions in the biosynthesis of the cell wall peptidoglycan: transfers peptidoglycan precursor phospho-MurNAc-pentapeptide from UDP-MurNAc-pentapeptide onto the lipid carrier undecaprenyl phosphate, yielding undecaprenyl-pyrophosphoryl-MurNAc-pentapeptide, known as lipid I. The protein is Phospho-N-acetylmuramoyl-pentapeptide-transferase of Chlamydia muridarum (strain MoPn / Nigg).